A 381-amino-acid chain; its full sequence is Creatine kinase B-type (381 aa).

Serine 4 is modified (phosphoserine). Residues 11–98 form the Phosphagen kinase N-terminal domain; sequence KLRFPAEDEF…FDPIIEDRHG (88 aa). Phosphothreonine is present on threonine 35. Lysine 45 participates in a covalent cross-link: Glycyl lysine isopeptide (Lys-Gly) (interchain with G-Cter in ubiquitin). Valine 72 contacts creatine. A compositionally biased stretch (basic and acidic residues) spans 96–110; that stretch reads RHGGYKPSDEHKTDL. Residues 96-123 are disordered; the sequence is RHGGYKPSDEHKTDLNPDNLQGGDDLDP. Residues lysine 101 and lysine 107 each participate in a glycyl lysine isopeptide (Lys-Gly) (interchain with G-Cter in ubiquitin) cross-link. Tyrosine 125 is modified (phosphotyrosine). Residues 125–367 enclose the Phosphagen kinase C-terminal domain; the sequence is YVLSSRVRTG…KLLIEMEQRL (243 aa). ATP-binding positions include 128–132, arginine 130, arginine 132, and histidine 191; that span reads SSRVR. Residues 130-138 are internal MTS-like signal; that stretch reads RVRTGRSIR. The residue at position 199 (serine 199) is a Phosphoserine. A creatine-binding site is contributed by glutamate 232. ATP is bound at residue arginine 236. 3'-nitrotyrosine is present on tyrosine 269. Residue serine 285 coordinates creatine. ATP contacts are provided by residues arginine 292, 292 to 296, arginine 320, 320 to 325, and aspartate 335; these read RAGVH and RGTGGV. Threonine 322 carries the phosphothreonine modification. Lysine 381 participates in a covalent cross-link: Glycyl lysine isopeptide (Lys-Gly) (interchain with G-Cter in ubiquitin).

This sequence belongs to the ATP:guanido phosphotransferase family. As to quaternary structure, dimer of identical or non-identical chains, which can be either B (brain type) or M (muscle type). With MM being the major form in skeletal muscle and myocardium, MB existing in myocardium, and BB existing in many tissues, especially brain. Interacts with SLC12A6 (via C-terminus); the interaction may be required for SLC12A6 potassium-chloride cotransport activity. Post-translationally, ubiquitinated by the ECS(ASB9) complex, leading to its degradation by the proteasome.

It localises to the cytoplasm. It is found in the cytosol. The protein localises to the mitochondrion. The protein resides in the cell membrane. It catalyses the reaction creatine + ATP = N-phosphocreatine + ADP + H(+). Its function is as follows. Reversibly catalyzes the transfer of phosphate between ATP and various phosphogens (e.g. creatine phosphate). Creatine kinase isoenzymes play a central role in energy transduction in tissues with large, fluctuating energy demands, such as skeletal muscle, heart, brain and spermatozoa. Acts as a key regulator of adaptive thermogenesis as part of the futile creatine cycle: localizes to the mitochondria of thermogenic fat cells and acts by mediating phosphorylation of creatine to initiate a futile cycle of creatine phosphorylation and dephosphorylation. During the futile creatine cycle, creatine and N-phosphocreatine are in a futile cycle, which dissipates the high energy charge of N-phosphocreatine as heat without performing any mechanical or chemical work. The sequence is that of Creatine kinase B-type (CKB) from Sus scrofa (Pig).